Consider the following 156-residue polypeptide: 6,7-dimethyl-8-ribityllumazine synthase (156 aa).

5-amino-6-(D-ribitylamino)uracil-binding positions include phenylalanine 22, 57–59 (AYE), and 81–83 (SVI). 86-87 (GT) is a (2S)-2-hydroxy-3-oxobutyl phosphate binding site. Histidine 89 functions as the Proton donor in the catalytic mechanism. Phenylalanine 114 is a binding site for 5-amino-6-(D-ribitylamino)uracil. Arginine 128 is a (2S)-2-hydroxy-3-oxobutyl phosphate binding site.

Belongs to the DMRL synthase family. Forms an icosahedral capsid composed of 60 subunits, arranged as a dodecamer of pentamers.

The enzyme catalyses (2S)-2-hydroxy-3-oxobutyl phosphate + 5-amino-6-(D-ribitylamino)uracil = 6,7-dimethyl-8-(1-D-ribityl)lumazine + phosphate + 2 H2O + H(+). It functions in the pathway cofactor biosynthesis; riboflavin biosynthesis; riboflavin from 2-hydroxy-3-oxobutyl phosphate and 5-amino-6-(D-ribitylamino)uracil: step 1/2. In terms of biological role, catalyzes the formation of 6,7-dimethyl-8-ribityllumazine by condensation of 5-amino-6-(D-ribitylamino)uracil with 3,4-dihydroxy-2-butanone 4-phosphate. This is the penultimate step in the biosynthesis of riboflavin. The chain is 6,7-dimethyl-8-ribityllumazine synthase from Photobacterium leiognathi.